A 638-amino-acid polypeptide reads, in one-letter code: Ubiquitin-like-specific protease 2 (638 aa).

Over residues 1–12 the composition is skewed to basic and acidic residues; it reads MRDSKDALDDKS. Disordered stretches follow at residues 1–79 and 238–314; these read MRDS…PKHL and PQKT…TSND. The span at 238-249 shows a compositional bias: polar residues; that stretch reads PQKTVRSIVKQT. Residues 250–264 show a composition bias toward low complexity; sequence SSPHSSKMPKHSLPS. Polar residues predominate over residues 267–314; that stretch reads TPFNSNSGDSLLSRIKNSNQSSSERPTANNGAQEQNQSSSSAGNTSND. Residues H440 and D494 contribute to the active site. T526 is modified (phosphothreonine). C544 is an active-site residue. Polar residues predominate over residues 610 to 619; that stretch reads NERQSLSSGS. The segment at 610–638 is disordered; sequence NERQSLSSGSNDEEDKENDDDLAILPITN. Over residues 620–631 the composition is skewed to acidic residues; sequence NDEEDKENDDDL.

This sequence belongs to the peptidase C48 family.

Its subcellular location is the nucleus. This is Ubiquitin-like-specific protease 2 (ulp2) from Schizosaccharomyces pombe (strain 972 / ATCC 24843) (Fission yeast).